Here is a 213-residue protein sequence, read N- to C-terminus: Large ribosomal subunit protein uL1 (213 aa).

Belongs to the universal ribosomal protein uL1 family. As to quaternary structure, part of the 50S ribosomal subunit.

Probably involved in E site tRNA release. Binds directly to 23S rRNA. Functionally, protein L1 is also a translational repressor protein, it controls the translation of the L1 operon by binding to its mRNA. Thus it also controls transcription of L10 and L12 by translational coupling. Unlike the case in E.coli, where the site is in the untranslated mRNA leader, this site is within the L1 protein's structural gene. The protein is Large ribosomal subunit protein uL1 of Methanococcus vannielii (strain ATCC 35089 / DSM 1224 / JCM 13029 / OCM 148 / SB).